The primary structure comprises 421 residues: Zinc metalloproteinase-disintegrin-like lachestatin-2 (421 aa).

One can recognise a Peptidase M12B domain in the interval 10–206 (KYVKLVLVAD…DMPQCILEKP (197 aa)). Disulfide bonds link Cys-121–Cys-201, Cys-161–Cys-185, and Cys-163–Cys-168. Zn(2+) is bound at residue His-146. The active site involves Glu-147. Zn(2+) contacts are provided by His-150 and His-156. The 86-residue stretch at 214-299 (PPVCGNYFVE…AECTDRFQRN (86 aa)) folds into the Disintegrin domain. Ca(2+) contacts are provided by Val-216, Asn-219, Phe-221, Glu-223, Glu-226, and Asp-229. Intrachain disulfides connect Cys-217-Cys-246, Cys-228-Cys-241, Cys-230-Cys-236, Cys-240-Cys-263, Cys-254-Cys-260, Cys-259-Cys-285, Cys-272-Cys-292, Cys-279-Cys-310, Cys-303-Cys-315, Cys-322-Cys-372, Cys-337-Cys-383, Cys-350-Cys-360, Cys-367-Cys-409, and Cys-403-Cys-414. The short motif at 278–280 (ECD) is the D/ECD-tripeptide element. Asp-280, Met-281, Asp-283, Asp-294, and Arg-295 together coordinate Ca(2+). The N-linked (GlcNAc...) asparagine glycan is linked to Asn-312.

It belongs to the venom metalloproteinase (M12B) family. P-III subfamily. P-IIIc sub-subfamily. Homodimer; disulfide-linked. Zn(2+) serves as cofactor. As to expression, expressed by the venom gland.

Its subcellular location is the secreted. Snake venom zinc metalloprotease that induces apoptosis in vascular endothelial cells (VEC), without degrading the extracellular matrix (it cannot cleave collagen) or inhibiting adhesion of VEC. Has also fibrinogenolytic and hemorrhagic activities. The polypeptide is Zinc metalloproteinase-disintegrin-like lachestatin-2 (Lachesis muta rhombeata (Bushmaster)).